A 223-amino-acid polypeptide reads, in one-letter code: RNA-free ribonuclease P (223 aa).

It belongs to the HARP family.

It carries out the reaction Endonucleolytic cleavage of RNA, removing 5'-extranucleotides from tRNA precursor.. Its function is as follows. RNA-free RNase P that catalyzes the removal of the 5'-leader sequence from pre-tRNA to produce the mature 5'-terminus. The sequence is that of RNA-free ribonuclease P from Methanococcus vannielii (strain ATCC 35089 / DSM 1224 / JCM 13029 / OCM 148 / SB).